The sequence spans 333 residues: Ketol-acid reductoisomerase (NADP(+)) (333 aa).

The 181-residue stretch at 2–182 folds into the KARI N-terminal Rossmann domain; sequence AKIFYDSDCN…GASRAGIILT (181 aa). NADP(+)-binding positions include 25 to 28, Ser51, Ser53, and 83 to 86; these read FGSQ and DEKQ. His108 is an active-site residue. Gly134 is an NADP(+) binding site. The region spanning 183–328 is the KARI C-terminal knotted domain; that stretch reads TFKEETETDL…KELRKMMPWI (146 aa). Residues Asp191, Glu195, Glu227, and Glu231 each contribute to the Mg(2+) site. Ser252 lines the substrate pocket.

It belongs to the ketol-acid reductoisomerase family. It depends on Mg(2+) as a cofactor.

The catalysed reaction is (2R)-2,3-dihydroxy-3-methylbutanoate + NADP(+) = (2S)-2-acetolactate + NADPH + H(+). It catalyses the reaction (2R,3R)-2,3-dihydroxy-3-methylpentanoate + NADP(+) = (S)-2-ethyl-2-hydroxy-3-oxobutanoate + NADPH + H(+). Its pathway is amino-acid biosynthesis; L-isoleucine biosynthesis; L-isoleucine from 2-oxobutanoate: step 2/4. It functions in the pathway amino-acid biosynthesis; L-valine biosynthesis; L-valine from pyruvate: step 2/4. Functionally, involved in the biosynthesis of branched-chain amino acids (BCAA). Catalyzes an alkyl-migration followed by a ketol-acid reduction of (S)-2-acetolactate (S2AL) to yield (R)-2,3-dihydroxy-isovalerate. In the isomerase reaction, S2AL is rearranged via a Mg-dependent methyl migration to produce 3-hydroxy-3-methyl-2-ketobutyrate (HMKB). In the reductase reaction, this 2-ketoacid undergoes a metal-dependent reduction by NADPH to yield (R)-2,3-dihydroxy-isovalerate. The sequence is that of Ketol-acid reductoisomerase (NADP(+)) from Caldicellulosiruptor bescii (strain ATCC BAA-1888 / DSM 6725 / KCTC 15123 / Z-1320) (Anaerocellum thermophilum).